Reading from the N-terminus, the 212-residue chain is uncharacterized protein (212 aa).

4 consecutive transmembrane segments (helical) span residues 20–40 (FLIG…LIIC), 70–90 (LMLL…YWLG), 155–175 (FVLI…YLGE), and 192–212 (QIVI…MEKI).

It belongs to the DedA family.

It localises to the cell membrane. This is an uncharacterized protein from Haemophilus influenzae (strain ATCC 51907 / DSM 11121 / KW20 / Rd).